The primary structure comprises 319 residues: MKKSITTLDLNLLLCLQLLMQERSVTKAAKRMNVTPSAVSKSLAKLRAWFDDPLFVNSPLGLSPTPLMVSMEQNLAEWMQMSNLLLDKPHHQTPRGLKFELAAESPLMMIMLNALSKQIYQRYPQATIKLRNWDYDSLDAITRGEVDIGFSGRESHPRSRELLSSLPLAIDYEVLFSDVPCVWLRKDHPALHEKWDLDTFLRYPHISICWEQSDTWALDNVLQELGRERTIAMSLPEFEQSLFMAAQPDNLLLATAPRYCQYYNQLHQLPLVALPLPFDESQQKKLEVPFTLLWHKRNSHNPKIVWLRDTIKNLYASMA.

The HTH lysR-type domain maps to 8-65 (LDLNLLLCLQLLMQERSVTKAAKRMNVTPSAVSKSLAKLRAWFDDPLFVNSPLGLSPT). The segment at residues 25–44 (VTKAAKRMNVTPSAVSKSLA) is a DNA-binding region (H-T-H motif).

The protein belongs to the LysR transcriptional regulatory family.

Functionally, involved in anaerobic NO protection. This Escherichia coli O157:H7 (strain EC4115 / EHEC) protein is HTH-type transcriptional regulator YidZ.